The chain runs to 604 residues: Putative O-acetyltransferase SAR0937 (604 aa).

11 helical membrane-spanning segments follow: residues 15–35 (YMPG…IYHL), 43–63 (GFLG…SLLL), 85–105 (LLPA…LLKS), 150–170 (AIEE…LLTI), 176–196 (IGFI…FIYS), 212–232 (LQTL…KLKN), 240–260 (YVID…FFII), 267–287 (IYDG…ASVV), 310–330 (YSLY…YVDG), 332–352 (IPVY…ELSY), and 377–397 (FIRM…LVGA). Catalysis depends on residues Ser459, Asp581, and His584.

This sequence belongs to the acyltransferase 3 family.

Its subcellular location is the cell membrane. This is Putative O-acetyltransferase SAR0937 from Staphylococcus aureus (strain MRSA252).